Reading from the N-terminus, the 183-residue chain is Adenine phosphoribosyltransferase (183 aa).

This sequence belongs to the purine/pyrimidine phosphoribosyltransferase family. As to quaternary structure, homodimer.

The protein localises to the cytoplasm. The enzyme catalyses AMP + diphosphate = 5-phospho-alpha-D-ribose 1-diphosphate + adenine. It functions in the pathway purine metabolism; AMP biosynthesis via salvage pathway; AMP from adenine: step 1/1. Its function is as follows. Catalyzes a salvage reaction resulting in the formation of AMP, that is energically less costly than de novo synthesis. This is Adenine phosphoribosyltransferase from Erwinia tasmaniensis (strain DSM 17950 / CFBP 7177 / CIP 109463 / NCPPB 4357 / Et1/99).